The chain runs to 235 residues: Sugar fermentation stimulation protein homolog (235 aa).

This sequence belongs to the SfsA family.

This is Sugar fermentation stimulation protein homolog from Bartonella henselae (strain ATCC 49882 / DSM 28221 / CCUG 30454 / Houston 1) (Rochalimaea henselae).